The primary structure comprises 293 residues: Acetylglutamate kinase (293 aa).

Residues 68-69 (GG), Arg-90, and Asn-189 each bind substrate.

It belongs to the acetylglutamate kinase family. ArgB subfamily.

It is found in the cytoplasm. The catalysed reaction is N-acetyl-L-glutamate + ATP = N-acetyl-L-glutamyl 5-phosphate + ADP. The protein operates within amino-acid biosynthesis; L-arginine biosynthesis; N(2)-acetyl-L-ornithine from L-glutamate: step 2/4. In terms of biological role, catalyzes the ATP-dependent phosphorylation of N-acetyl-L-glutamate. In Mycobacterium marinum (strain ATCC BAA-535 / M), this protein is Acetylglutamate kinase.